The primary structure comprises 360 residues: Cyclin-dependent kinase 10 (360 aa).

In terms of domain architecture, Protein kinase spans 39–323 (FEKLNRIGEG…AGDCLESSYF (285 aa)). Residues 45 to 53 (IGEGTYGIV) and Lys68 each bind ATP. Catalysis depends on Asp163, which acts as the Proton acceptor. A Phosphothreonine modification is found at Thr196. Residues 334 to 360 (LMPTFPHHRNKRAAPATSEGQSKRCKP) are disordered.

Belongs to the protein kinase superfamily. CMGC Ser/Thr protein kinase family. CDC2/CDKX subfamily. Heterodimer with CCNQ, the interaction is required for kinase activity. Interacts with ETS2. Interacts with PRK2.

The protein resides in the cytoplasm. The protein localises to the cytoskeleton. Its subcellular location is the cilium basal body. It catalyses the reaction L-seryl-[protein] + ATP = O-phospho-L-seryl-[protein] + ADP + H(+). The enzyme catalyses L-threonyl-[protein] + ATP = O-phospho-L-threonyl-[protein] + ADP + H(+). In terms of biological role, cyclin-dependent kinase that phosphorylates the transcription factor ETS2 (in vitro) and positively controls its proteasomal degradation (in cells). Involved in the regulation of actin cytoskeleton organization through the phosphorylation of actin dynamics regulators such as PKN2. Is a negative regulator of ciliogenesis through phosphorylation of PKN2 and promotion of RhoA signaling. The polypeptide is Cyclin-dependent kinase 10 (CDK10) (Homo sapiens (Human)).